We begin with the raw amino-acid sequence, 2599 residues long: Protein DOP1 homolog (2599 aa).

Disordered stretches follow at residues 532 to 571 (EQSG…SDSR) and 595 to 701 (ASNQ…LDEE). Composition is skewed to polar residues over residues 534-549 (SGGS…NSAS), 595-604 (ASNQSVGRQS), and 625-636 (ASDTGQQSSSDL). Residue S753 is modified to Phosphoserine. Positions 1240–1251 (PRIEIPHKETPL) are enriched in basic and acidic residues. 2 disordered regions span residues 1240-1316 (PRIE…SSSA) and 1347-1368 (TYRL…EQKD). Over residues 1264-1282 (QPSQEQPANQPDNSLQYDQ) the composition is skewed to polar residues. Over residues 1297 to 1309 (SELRETSIEKEDS) the composition is skewed to basic and acidic residues. T1355 is subject to Phosphothreonine. Phosphoserine occurs at positions 1360, 1363, and 1371. A disordered region spans residues 1409-1442 (CISKTSTDSNISGSHVEQPEQEEETEPGTESTIN). Positions 1410 to 1423 (ISKTSTDSNISGSH) are enriched in polar residues. A Phosphoserine modification is found at S2525.

Belongs to the DOP1 family.

It is found in the golgi apparatus membrane. In terms of biological role, may be involved in protein traffic between late Golgi and early endosomes. In Drosophila melanogaster (Fruit fly), this protein is Protein DOP1 homolog.